The following is an 86-amino-acid chain: Toxin Td1 (86 aa).

A signal peptide spans 1 to 20; it reads MIRFILFISCFFLIGMVIEC. One can recognise an LCN-type CS-alpha/beta domain in the interval 21-83; the sequence is KDGYLMEPNG…VWERATNRCG (63 aa). Intrachain disulfides connect cysteine 31-cysteine 82, cysteine 35-cysteine 57, cysteine 43-cysteine 63, and cysteine 47-cysteine 65. Lysine 84 bears the Lysine amide mark.

Expressed by the venom gland.

The protein resides in the secreted. Beta toxins bind voltage-independently at site-4 of sodium channels (Nav) and shift the voltage of activation toward more negative potentials thereby affecting sodium channel activation and promoting spontaneous and repetitive firing. In Tityus discrepans (Venezuelan scorpion), this protein is Toxin Td1.